Reading from the N-terminus, the 224-residue chain is Metalloproteinase inhibitor 4 (224 aa).

The first 29 residues, 1–29 (MPWSPLAALSWALVLRLLALLWPPGRGEA), serve as a signal peptide directing secretion. Cysteine 30 is a binding site for Zn(2+). Involved in metalloproteinase-binding stretches follow at residues 30–33 (CSCA) and 99–100 (SS). Intrachain disulfides connect cysteine 30-cysteine 102, cysteine 32-cysteine 131, cysteine 42-cysteine 156, cysteine 158-cysteine 205, cysteine 163-cysteine 168, and cysteine 176-cysteine 197. The NTR domain maps to 30–156 (CSCAPAHPQQ…SLNHHYHQNC (127 aa)).

Belongs to the protease inhibitor I35 (TIMP) family. Expressed in brain, heart, ovary and skeletal muscle.

Its subcellular location is the secreted. Complexes with metalloproteinases (such as collagenases) and irreversibly inactivates them by binding to their catalytic zinc cofactor. The chain is Metalloproteinase inhibitor 4 (Timp4) from Mus musculus (Mouse).